The primary structure comprises 62 residues: Photosystem II reaction center protein Z (62 aa).

Transmembrane regions (helical) follow at residues 8–28 and 41–61; these read AVFA…VVLA and FSGA…NSFI.

It belongs to the PsbZ family. In terms of assembly, PSII is composed of 1 copy each of membrane proteins PsbA, PsbB, PsbC, PsbD, PsbE, PsbF, PsbH, PsbI, PsbJ, PsbK, PsbL, PsbM, PsbT, PsbY, PsbZ, Psb30/Ycf12, at least 3 peripheral proteins of the oxygen-evolving complex and a large number of cofactors. It forms dimeric complexes.

It localises to the plastid. The protein resides in the chloroplast thylakoid membrane. Functionally, may control the interaction of photosystem II (PSII) cores with the light-harvesting antenna, regulates electron flow through the 2 photosystem reaction centers. PSII is a light-driven water plastoquinone oxidoreductase, using light energy to abstract electrons from H(2)O, generating a proton gradient subsequently used for ATP formation. The polypeptide is Photosystem II reaction center protein Z (Anthoceros angustus (Hornwort)).